The sequence spans 179 residues: Large ribosomal subunit protein uL5 (179 aa).

This sequence belongs to the universal ribosomal protein uL5 family. In terms of assembly, part of the 50S ribosomal subunit; part of the 5S rRNA/L5/L18/L25 subcomplex. Contacts the 5S rRNA and the P site tRNA. Forms a bridge to the 30S subunit in the 70S ribosome.

Functionally, this is one of the proteins that bind and probably mediate the attachment of the 5S RNA into the large ribosomal subunit, where it forms part of the central protuberance. In the 70S ribosome it contacts protein S13 of the 30S subunit (bridge B1b), connecting the 2 subunits; this bridge is implicated in subunit movement. Contacts the P site tRNA; the 5S rRNA and some of its associated proteins might help stabilize positioning of ribosome-bound tRNAs. This chain is Large ribosomal subunit protein uL5, found in Staphylococcus saprophyticus subsp. saprophyticus (strain ATCC 15305 / DSM 20229 / NCIMB 8711 / NCTC 7292 / S-41).